The chain runs to 361 residues: Queuine tRNA-ribosyltransferase (361 aa).

The Proton acceptor role is filled by D92. Substrate is bound by residues 92 to 96 (DSGGF), D146, Q189, and G216. An RNA binding region spans residues 247 to 253 (GVGKPAD). D266 acts as the Nucleophile in catalysis. The RNA binding; important for wobble base 34 recognition stretch occupies residues 271–275 (TRSGR). Residues C304, C306, C309, and H335 each coordinate Zn(2+).

It belongs to the queuine tRNA-ribosyltransferase family. As to quaternary structure, homodimer. Within each dimer, one monomer is responsible for RNA recognition and catalysis, while the other monomer binds to the replacement base PreQ1. Zn(2+) serves as cofactor.

It catalyses the reaction 7-aminomethyl-7-carbaguanine + guanosine(34) in tRNA = 7-aminomethyl-7-carbaguanosine(34) in tRNA + guanine. It functions in the pathway tRNA modification; tRNA-queuosine biosynthesis. In terms of biological role, catalyzes the base-exchange of a guanine (G) residue with the queuine precursor 7-aminomethyl-7-deazaguanine (PreQ1) at position 34 (anticodon wobble position) in tRNAs with GU(N) anticodons (tRNA-Asp, -Asn, -His and -Tyr). Catalysis occurs through a double-displacement mechanism. The nucleophile active site attacks the C1' of nucleotide 34 to detach the guanine base from the RNA, forming a covalent enzyme-RNA intermediate. The proton acceptor active site deprotonates the incoming PreQ1, allowing a nucleophilic attack on the C1' of the ribose to form the product. After dissociation, two additional enzymatic reactions on the tRNA convert PreQ1 to queuine (Q), resulting in the hypermodified nucleoside queuosine (7-(((4,5-cis-dihydroxy-2-cyclopenten-1-yl)amino)methyl)-7-deazaguanosine). The protein is Queuine tRNA-ribosyltransferase of Rickettsia akari (strain Hartford).